We begin with the raw amino-acid sequence, 181 residues long: uncharacterized protein (181 aa).

A Macro domain is found at 1–178 (MVVAYKLSNG…VFKKVFDNSL (178 aa)).

This is an uncharacterized protein from Sulfolobus acidocaldarius (strain ATCC 33909 / DSM 639 / JCM 8929 / NBRC 15157 / NCIMB 11770).